The chain runs to 126 residues: Glycine cleavage system H protein (126 aa).

One can recognise a Lipoyl-binding domain in the interval 22-104 (VAIIGITEYA…YEKAWMVKVE (83 aa)). K63 is subject to N6-lipoyllysine.

Belongs to the GcvH family. As to quaternary structure, the glycine cleavage system is composed of four proteins: P, T, L and H. Requires (R)-lipoate as cofactor.

The glycine cleavage system catalyzes the degradation of glycine. The H protein shuttles the methylamine group of glycine from the P protein to the T protein. Functionally, is also involved in protein lipoylation via its role as an octanoyl/lipoyl carrier protein intermediate. The sequence is that of Glycine cleavage system H protein from Staphylococcus aureus (strain USA300).